We begin with the raw amino-acid sequence, 94 residues long: Phosphoribosyl-ATP pyrophosphatase (94 aa).

This sequence belongs to the PRA-PH family.

The protein resides in the cytoplasm. It catalyses the reaction 1-(5-phospho-beta-D-ribosyl)-ATP + H2O = 1-(5-phospho-beta-D-ribosyl)-5'-AMP + diphosphate + H(+). It participates in amino-acid biosynthesis; L-histidine biosynthesis; L-histidine from 5-phospho-alpha-D-ribose 1-diphosphate: step 2/9. This is Phosphoribosyl-ATP pyrophosphatase from Pyrobaculum arsenaticum (strain DSM 13514 / JCM 11321 / PZ6).